Consider the following 183-residue polypeptide: A-type ATP synthase subunit E (183 aa).

This sequence belongs to the V-ATPase E subunit family. Has multiple subunits with at least A(3), B(3), C, D, E, F, H, I and proteolipid K(x).

It localises to the cell membrane. Component of the A-type ATP synthase that produces ATP from ADP in the presence of a proton gradient across the membrane. This chain is A-type ATP synthase subunit E, found in Methanosarcina barkeri (strain Fusaro / DSM 804).